The sequence spans 215 residues: Pyrrolidone-carboxylate peptidase (215 aa).

Active-site residues include Glu-80, Cys-143, and His-167.

The protein belongs to the peptidase C15 family. In terms of assembly, homotetramer.

The protein localises to the cytoplasm. It catalyses the reaction Release of an N-terminal pyroglutamyl group from a polypeptide, the second amino acid generally not being Pro.. Its function is as follows. Removes 5-oxoproline from various penultimate amino acid residues except L-proline. In Yersinia pseudotuberculosis serotype O:1b (strain IP 31758), this protein is Pyrrolidone-carboxylate peptidase.